Here is a 162-residue protein sequence, read N- to C-terminus: Protein SLM4 (162 aa).

A helical membrane pass occupies residues 127–144 (LLLLFIAEGSFPYGLLVI).

As to quaternary structure, component of the GSE complex composed of GTR1, GTR2, SLM4, MEH1 and LTV1. Component of the EGO complex, at least composed of GTR2, SLM4 and MEH1.

It localises to the vacuole membrane. Its function is as follows. Component of the GSE complex, a GTPase complex required for intracellular sorting of GAP1 out of the endosome. Component of the EGO complex, a complex involved in the regulation of microautophagy. The chain is Protein SLM4 (SLM4) from Saccharomyces cerevisiae (strain ATCC 204508 / S288c) (Baker's yeast).